A 161-amino-acid chain; its full sequence is Long arms of the bivalent protein 1 (161 aa).

Residues 72 to 75 (KVIW) carry the PP1 binding motif motif. The tract at residues 85-161 (GTMFEDFKED…SDKTMCSGQS (77 aa)) is disordered. Residues 97–115 (QESVSSISNNEANWGSSVN) show a composition bias toward polar residues. A compositionally biased stretch (basic and acidic residues) spans 120–129 (NYEKMQKEET). A compositionally biased stretch (acidic residues) spans 130–151 (FDPYDSDSDTSEDSDFDEDFED).

As to quaternary structure, interacts with gsp-1 and gsp-2; the interaction is direct.

It localises to the chromosome. Its subcellular location is the nucleus. Its function is as follows. Involved in sister chromatid cohesion during mitosis and meiosis. In association with the gsp-2 phosphatase, it both restricts the localization and antagonizes the function of the air-2 kinase during meiosis I and mitosis to promote chromatid cohesion and spindle attachment. This in turn, drives germ cell immortality. Furthermore, may play a role in ensuring the timely assembly of the synaptonemal complex during prophase I of meiosis. The sequence is that of Long arms of the bivalent protein 1 from Caenorhabditis elegans.